Reading from the N-terminus, the 590-residue chain is Aspartate--tRNA(Asp/Asn) ligase (590 aa).

Residue Glu-178 coordinates L-aspartate. The interval 202–205 is aspartate; it reads QIYK. Arg-224 contributes to the L-aspartate binding site. Residues 224-226 and Gln-233 each bind ATP; that span reads RDE. Position 453 (His-453) interacts with L-aspartate. Position 487 (Glu-487) interacts with ATP. Arg-494 is a binding site for L-aspartate. 539 to 542 lines the ATP pocket; sequence GLDR.

The protein belongs to the class-II aminoacyl-tRNA synthetase family. Type 1 subfamily. In terms of assembly, homodimer.

It is found in the cytoplasm. It catalyses the reaction tRNA(Asx) + L-aspartate + ATP = L-aspartyl-tRNA(Asx) + AMP + diphosphate. Aspartyl-tRNA synthetase with relaxed tRNA specificity since it is able to aspartylate not only its cognate tRNA(Asp) but also tRNA(Asn). Reaction proceeds in two steps: L-aspartate is first activated by ATP to form Asp-AMP and then transferred to the acceptor end of tRNA(Asp/Asn). This Treponema denticola (strain ATCC 35405 / DSM 14222 / CIP 103919 / JCM 8153 / KCTC 15104) protein is Aspartate--tRNA(Asp/Asn) ligase.